Here is a 188-residue protein sequence, read N- to C-terminus: Adenylate kinase (188 aa).

ATP is bound at residue 10–15 (GCGKGT). Positions 30–59 (STGDMLRHARAAGTELGRRVAAIMDGGNLV) are NMP. AMP contacts are provided by residues Thr-31, Arg-36, 57–59 (NLV), 85–88 (GFPR), and Gln-92. An LID region spans residues 126-136 (KRAEEEGRPDD). Arg-127 is a binding site for ATP. Positions 133 and 144 each coordinate AMP. Gly-172 contributes to the ATP binding site.

Belongs to the adenylate kinase family. Monomer.

It is found in the cytoplasm. It catalyses the reaction AMP + ATP = 2 ADP. It functions in the pathway purine metabolism; AMP biosynthesis via salvage pathway; AMP from ADP: step 1/1. In terms of biological role, catalyzes the reversible transfer of the terminal phosphate group between ATP and AMP. Plays an important role in cellular energy homeostasis and in adenine nucleotide metabolism. The sequence is that of Adenylate kinase from Maricaulis maris (strain MCS10) (Caulobacter maris).